The primary structure comprises 413 residues: Transmembrane protein 184A (413 aa).

The next 7 membrane-spanning stretches (helical) occupy residues 47–69, 93–113, 130–150, 187–207, 223–243, 258–278, and 300–320; these read WLFLTSALARGVSGIFVWTALVL, LLLIVPIYAFDSWLSLLLLGD, FVIYSFLSLCFQYLGGEGAIM, LQFCLVKPVMAVTTIILQAFG, VTLIYNASVSLALYALFLFYF, FLTIKAVIFLSFWQGLLLAIL, and LAAGYQNFIICVEMLFASVAL. The segment at 372-413 is disordered; the sequence is QHYTQQATHEAPRPGTHPSGGSGGSRKSRSLEKRMLIPSEDL.

It belongs to the TMEM184 family. As to expression, expressed in vascular cells (at protein level).

It localises to the cell membrane. It is found in the cytoplasm. Its subcellular location is the perinuclear region. The protein resides in the cytoplasmic vesicle membrane. The protein localises to the early endosome membrane. It localises to the endosome. It is found in the cytoplasmic vesicle. Its subcellular location is the secretory vesicle membrane. Functionally, acts as a heparin receptor in vascular cells. May be involved in vesicle transport in exocrine cells and Sertoli cells. This is Transmembrane protein 184A (TMEM184A) from Homo sapiens (Human).